The primary structure comprises 885 residues: Alanine--tRNA ligase (885 aa).

Zn(2+) contacts are provided by His571, His575, Cys674, and His678.

The protein belongs to the class-II aminoacyl-tRNA synthetase family. It depends on Zn(2+) as a cofactor.

The protein resides in the cytoplasm. It catalyses the reaction tRNA(Ala) + L-alanine + ATP = L-alanyl-tRNA(Ala) + AMP + diphosphate. Functionally, catalyzes the attachment of alanine to tRNA(Ala) in a two-step reaction: alanine is first activated by ATP to form Ala-AMP and then transferred to the acceptor end of tRNA(Ala). Also edits incorrectly charged Ser-tRNA(Ala) and Gly-tRNA(Ala) via its editing domain. This chain is Alanine--tRNA ligase, found in Clavibacter michiganensis subsp. michiganensis (strain NCPPB 382).